The sequence spans 371 residues: Putative RNA-binding protein Luc7-like 1 (371 aa).

Coiled coils occupy residues 87 to 177 (MDHL…RNSM) and 218 to 259 (FIQI…LSRR). The span at 232–257 (VAEKQEKRNQDRLRRREEREREERLS) shows a compositional bias: basic and acidic residues. A disordered region spans residues 232 to 371 (VAEKQEKRNQ…RSEEKEAGEI (140 aa)). Residues 258 to 317 (RRSGSRTRDRRRSRSRDRRRRRSRSTSRERRKLSRSRSRDRHRRHRSRSRSHSRGHRRAS) are compositionally biased toward basic residues. Composition is skewed to basic and acidic residues over residues 318–351 (RDRS…DWRL) and 361–371 (RRSEEKEAGEI). 3 positions are modified to phosphoserine: Ser332, Ser336, and Ser363.

This sequence belongs to the Luc7 family. As to expression, ubiquitous.

Functionally, may bind to RNA via its Arg/Ser-rich domain. The protein is Putative RNA-binding protein Luc7-like 1 (LUC7L) of Homo sapiens (Human).